Consider the following 200-residue polypeptide: Peptidyl-tRNA hydrolase (200 aa).

Position 17 (Y17) interacts with tRNA. H22 (proton acceptor) is an active-site residue. Y78, N80, and N126 together coordinate tRNA.

This sequence belongs to the PTH family. In terms of assembly, monomer.

The protein localises to the cytoplasm. The catalysed reaction is an N-acyl-L-alpha-aminoacyl-tRNA + H2O = an N-acyl-L-amino acid + a tRNA + H(+). Hydrolyzes ribosome-free peptidyl-tRNAs (with 1 or more amino acids incorporated), which drop off the ribosome during protein synthesis, or as a result of ribosome stalling. Its function is as follows. Catalyzes the release of premature peptidyl moieties from peptidyl-tRNA molecules trapped in stalled 50S ribosomal subunits, and thus maintains levels of free tRNAs and 50S ribosomes. This chain is Peptidyl-tRNA hydrolase, found in Cutibacterium acnes (strain DSM 16379 / KPA171202) (Propionibacterium acnes).